Reading from the N-terminus, the 442-residue chain is 3-isopropylmalate dehydratase large subunit (442 aa).

Xaa-347, Cys-407, and Cys-410 together coordinate [4Fe-4S] cluster.

Belongs to the aconitase/IPM isomerase family. LeuC type 1 subfamily. As to quaternary structure, heterodimer of LeuC and LeuD. It depends on [4Fe-4S] cluster as a cofactor.

The catalysed reaction is (2R,3S)-3-isopropylmalate = (2S)-2-isopropylmalate. The protein operates within amino-acid biosynthesis; L-leucine biosynthesis; L-leucine from 3-methyl-2-oxobutanoate: step 2/4. Catalyzes the isomerization between 2-isopropylmalate and 3-isopropylmalate, via the formation of 2-isopropylmaleate. The protein is 3-isopropylmalate dehydratase large subunit of Buchnera aphidicola subsp. Macrosiphoniella ludovicianae.